The primary structure comprises 494 residues: Glutamyl-tRNA(Gln) amidotransferase subunit A (494 aa).

Catalysis depends on charge relay system residues Lys72 and Ser147. Ser171 (acyl-ester intermediate) is an active-site residue.

It belongs to the amidase family. GatA subfamily. Heterotrimer of A, B and C subunits.

It catalyses the reaction L-glutamyl-tRNA(Gln) + L-glutamine + ATP + H2O = L-glutaminyl-tRNA(Gln) + L-glutamate + ADP + phosphate + H(+). In terms of biological role, allows the formation of correctly charged Gln-tRNA(Gln) through the transamidation of misacylated Glu-tRNA(Gln) in organisms which lack glutaminyl-tRNA synthetase. The reaction takes place in the presence of glutamine and ATP through an activated gamma-phospho-Glu-tRNA(Gln). The chain is Glutamyl-tRNA(Gln) amidotransferase subunit A from Methylacidiphilum infernorum (isolate V4) (Methylokorus infernorum (strain V4)).